Reading from the N-terminus, the 215-residue chain is Thiamine-phosphate synthase (215 aa).

4-amino-2-methyl-5-(diphosphooxymethyl)pyrimidine contacts are provided by residues 42–46 (QYREK) and aspartate 77. Residues aspartate 78 and aspartate 97 each contribute to the Mg(2+) site. Serine 116 serves as a coordination point for 4-amino-2-methyl-5-(diphosphooxymethyl)pyrimidine. 143–145 (TKS) is a 2-[(2R,5Z)-2-carboxy-4-methylthiazol-5(2H)-ylidene]ethyl phosphate binding site. Lysine 146 serves as a coordination point for 4-amino-2-methyl-5-(diphosphooxymethyl)pyrimidine. 2-[(2R,5Z)-2-carboxy-4-methylthiazol-5(2H)-ylidene]ethyl phosphate-binding positions include glycine 174 and 194-195 (IS).

Belongs to the thiamine-phosphate synthase family. It depends on Mg(2+) as a cofactor.

The catalysed reaction is 2-[(2R,5Z)-2-carboxy-4-methylthiazol-5(2H)-ylidene]ethyl phosphate + 4-amino-2-methyl-5-(diphosphooxymethyl)pyrimidine + 2 H(+) = thiamine phosphate + CO2 + diphosphate. It catalyses the reaction 2-(2-carboxy-4-methylthiazol-5-yl)ethyl phosphate + 4-amino-2-methyl-5-(diphosphooxymethyl)pyrimidine + 2 H(+) = thiamine phosphate + CO2 + diphosphate. The enzyme catalyses 4-methyl-5-(2-phosphooxyethyl)-thiazole + 4-amino-2-methyl-5-(diphosphooxymethyl)pyrimidine + H(+) = thiamine phosphate + diphosphate. The protein operates within cofactor biosynthesis; thiamine diphosphate biosynthesis; thiamine phosphate from 4-amino-2-methyl-5-diphosphomethylpyrimidine and 4-methyl-5-(2-phosphoethyl)-thiazole: step 1/1. Its function is as follows. Condenses 4-methyl-5-(beta-hydroxyethyl)thiazole monophosphate (THZ-P) and 2-methyl-4-amino-5-hydroxymethyl pyrimidine pyrophosphate (HMP-PP) to form thiamine monophosphate (TMP). The protein is Thiamine-phosphate synthase of Limosilactobacillus reuteri (strain DSM 20016) (Lactobacillus reuteri).